The following is a 290-amino-acid chain: Sodium/potassium-transporting ATPase subunit beta-2 (290 aa).

At 1–39 (MVIQKEKKSCGQVVEEWKEFVWNPRTHQFMGRTGTSWAF) the chain is on the cytoplasmic side. Residues 40–67 (ILLFYLVFYGFLTAMFTLTMWVMLQTVS) traverse the membrane as a helical; Signal-anchor for type II membrane protein segment. Over 68 to 290 (EHTPKYQDRL…VAFKLRINKT (223 aa)) the chain is Extracellular. Residues Asn-96 and Asn-118 are each glycosylated (N-linked (GlcNAc...) asparagine). A disulfide bond links Cys-129 and Cys-150. N-linked (GlcNAc...) asparagine glycosylation is found at Asn-153 and Asn-159. Cysteines 160 and 177 form a disulfide. N-linked (GlcNAc...) asparagine glycans are attached at residues Asn-193, Asn-197, and Asn-238. Positions 193–290 (NQSMNVTCAG…VAFKLRINKT (98 aa)) are immunoglobulin-like. Cysteines 200 and 261 form a disulfide.

Belongs to the X(+)/potassium ATPases subunit beta family. In terms of assembly, the sodium/potassium-transporting ATPase is composed of a catalytic alpha subunit, an auxiliary non-catalytic beta subunit and an additional regulatory subunit. Interacts with BSG.

Its subcellular location is the cell membrane. This is the non-catalytic component of the active enzyme, which catalyzes the hydrolysis of ATP coupled with the exchange of Na(+) and K(+) ions across the plasma membrane. The exact function of the beta-2 subunit is not known. Its function is as follows. Mediates cell adhesion of neurons and astrocytes, and promotes neurite outgrowth. The protein is Sodium/potassium-transporting ATPase subunit beta-2 (ATP1B2) of Oryctolagus cuniculus (Rabbit).